Consider the following 496-residue polypeptide: Catalase isozyme 3 (496 aa).

Residues Met-1–Ala-25 are disordered. The segment covering Arg-9–Ala-23 has biased composition (polar residues). Residues His-67 and Asn-140 contribute to the active site. Tyr-351 provides a ligand contact to heme. Positions Pro-402–Glu-422 are disordered.

Belongs to the catalase family. In terms of assembly, homotetramer. Heme is required as a cofactor. As to expression, leaf mesophyll cells, pericarp, seedling roots and the coleoptile.

The protein resides in the mitochondrion. It catalyses the reaction 2 H2O2 = O2 + 2 H2O. Its function is as follows. Occurs in almost all aerobically respiring organisms and serves to protect cells from the toxic effects of hydrogen peroxide. Its levels are highest in the light period and are lowest in the dark period, hence it may be important for scavenging hydrogen peroxide at night, rather than during the day. This Zea mays (Maize) protein is Catalase isozyme 3 (CAT3).